The sequence spans 2304 residues: MKGHQLKSWIFELREILREIKNSHYFLDSWTKLNLVGSFTHIFFHQERFMKLFDPRIWSILLSCDSQSSTSNRYFTIKGVVLLVVAVLIYRINNRNMVERKNLYLMRLLPIPMNSIGPRNDTLEESFLSSNINRLIVSLLYLPKGKKISESCFMDPKESTWLLPITKKCIMPESNWGSRWWRNRIGKKRDSSCKISNETVAGIEISFKEKDIKYLEFLFVSYTDTDDPIRKDHDLELFDRLSPGKKQNIINLNSGQLFEILVKHLICYLMSAFREKRPIEVEGFFKQQGAEATIQSNDIEHVPRLFSGNKNKWGISLQNCAQFHMWQFHQDLFVSWGKNQHESDFLRNVSRENLIWLGSMWLVNKDRFFSKVRNVSSNIQYDSTRSIFVKVTDSSQLKGSSDQSRDHFNSISNEDSEYHTLIHQTEIEQLKERSILWDPSFLQTERTEIESDRFPKCLSGYFSMSRLFTEREKQMNNHLFPEEIEEFIGNPTRSIRSFFSDRWSELHLGSNATERSTRDQKLLKKQQDVSFVPSRRSENKEMVDIFKIITYLQNTVSIHPISSDPGCDMVPKDEPDMDSSNKISFLNKNPFCDLFHLFHGRNKGGYTLHHDFESEERFQERADLFTLSITEPDLMYHKGFAFSIDSYGLDQKKLLNEVFNSRDESKKKSLLVLPHIFYEENESFYRRIRTKSVRISCRNGLEDPKIVVFASNNIMEAVNQYRLIRNLIQIQYSTYGYIRNVSKRFFLMNRSDRNFEYGIQRDQIGNDTLNHITIMKYTINQHLSNLKKSQKKWFDPLISRTERSMNRDPNAYRYKWSNGSKNFQEHLEHFVSEQKNRFQVVFDRLRINQHSIDWSEVIDKQDLSKSLRFFLSKSLLFLSKSLPFFFVSIGNIPIHRSEIHIYELKGPNDQLCNQLLESIGVQIVHLNKLKPFLLDDHDTSQRSKLLINGGTIARFWFNKIPKWMIDSFHTRNNRGKSFENTDSYFSMISHDRDNWLNPVKPFHRSSLISSFYKANQLRFLNNPHHFWFYCNKRFPFYAEKTRINNYDLTYGQFLNISFIRNKIFSLCVGKKKHVFLERDTISPSPIESQVSDIFIPNDFPQSGDETYNLYKSFHFPTRSDPFVRRAIYSIADISGTPLTEEQRVNFEGTYCQPLSDLNLSDSEGKNLHQYLSFNSNMGLIHTPCSEKYLPSGKRKKRNLCLNKCVEKRQMYRTFQRDSAFSNISKWNLFQTYMPWFLTSTGCKYINFILLDTFSDPLPILSSSHKFVSIFHDIMHGSAWSIPQKKLRAILPQWNLISEISSKCLQNLLLSEEMIHRNNESPVPLIWTHLRSPNPREFFYSSLFLLLVAGYLVRTHLLFVSRVSSELHTELEKIKSLMIPSYMMELRKLLDSYPPPELNSFWLKNLFLVALEQLGDSPEEIRGSDSGGNMLLGGGPAYGVKSIRSKKKDLNINLIDIIDLISIIPNPVNPITFSINTRRLSRTSKEIYSLIRKRKNVNSDWIDGKIESWVANSDLIDDEEREFLVQFSALTTEKRIDQILWSLTHSDPFSKNDSGYQMIEQPGSIYLRYLVDIHKKYLMNSEFNRSCLAERRIFLAHYQTITYSQTSCGANSSHFPSHGKPFSLRLDLSPSRGILVIGSIGTGRSYLVKYLATNSYLPSITVSPNKFLDDKPKGYLIDDIDDSDDIDLDDSNSIDDSDDVDIGDSDDIDIDDDLDAELLTMTNVLTMYMTPKMDRFDITPQLELAKAMSPCIIWIPNIHDLYVNESNYLSLGLLVNHLSRDCERCSTRNILVIASTHIPQKVDPALIAPNKSNTCIKIRRLLIPQQRKHFFILSYTRGFHLEKKMFHTNGFGSITMGSNARDLVALTNEALSISITQKKSIIDTNTIRSALHRQTWDLRSQVRSVQDHGILFYQIGRSFAQNVLLSNCSIDPISTYMKKKSCKEGDSYLYKWYFELGTSIKKLTTLLYLLSCSAGSVAQDLWSPPGPDEKNWITSYGFVENDSDLVHGLLEGALVGSSRTEKDCSQFDNDRVTLLLRSEPRNPLDMMQNGSCSIVDQRFLYEKYESEFEEGEGEGTLDPQQIEEDLFNHIVWAPRIWRPCGNLFDCIERPNESRFPYRSRSFRGKQIISHKEDELQENDLEFLQSGTMQYQTRDRSSKEQGFFQISQFIWDPADPFFFLFKDQPFVSVFARREFFADEEMSKGLITSQTHSPTSIYERWLIKNTQEKHFELLIHRQRWLSTNSSLSNGSFRSNTPSESYQYLSNLFLSNGTLLDQMAKTLLRKRWLFPDEMKHLIHVTGERFPIP.

1637 to 1644 provides a ligand contact to ATP; it reads GSIGTGRS.

The protein belongs to the Ycf2 family.

It localises to the plastid. The protein resides in the chloroplast stroma. In terms of biological role, probable ATPase of unknown function. Its presence in a non-photosynthetic plant (Epifagus virginiana) and experiments in tobacco indicate that it has an essential function which is probably not related to photosynthesis. The polypeptide is Protein Ycf2 (Amborella trichopoda).